The sequence spans 310 residues: ADP-L-glycero-D-manno-heptose-6-epimerase (310 aa).

NADP(+)-binding positions include 10-11, 31-32, K38, K53, 75-79, and N92; these read FI, DN, and EGACS. Y140 acts as the Proton acceptor in catalysis. NADP(+) is bound at residue K144. Residue N169 participates in substrate binding. Residues V170 and K178 each coordinate NADP(+). The active-site Proton acceptor is K178. Residues G180, H187, 201–204, R209, and Y272 each bind substrate; that span reads FAGS.

Belongs to the NAD(P)-dependent epimerase/dehydratase family. HldD subfamily. As to quaternary structure, homopentamer. The cofactor is NADP(+).

It catalyses the reaction ADP-D-glycero-beta-D-manno-heptose = ADP-L-glycero-beta-D-manno-heptose. The protein operates within nucleotide-sugar biosynthesis; ADP-L-glycero-beta-D-manno-heptose biosynthesis; ADP-L-glycero-beta-D-manno-heptose from D-glycero-beta-D-manno-heptose 7-phosphate: step 4/4. Functionally, catalyzes the interconversion between ADP-D-glycero-beta-D-manno-heptose and ADP-L-glycero-beta-D-manno-heptose via an epimerization at carbon 6 of the heptose. In Sodalis glossinidius (strain morsitans), this protein is ADP-L-glycero-D-manno-heptose-6-epimerase.